Reading from the N-terminus, the 379-residue chain is Cytochrome b (379 aa).

4 helical membrane passes run 33-53, 77-98, 113-133, and 178-198; these read FGSLLGLCLIAQILTGLFLAM, WLIRNMHANGASFFFICIYLHI, WNVGVVLLLLVMMTAFVGYVL, and FFAFHFLLPFIGAAATLVHLI. Residues histidine 83 and histidine 97 each coordinate heme b. Histidine 182 and histidine 196 together coordinate heme b. Histidine 201 serves as a coordination point for a ubiquinone. The next 4 membrane-spanning stretches (helical) occupy residues 226–246, 288–308, 320–340, and 347–367; these read YKDILGFTFLLTALIALALFS, LGGVLALLASILVLMVVPLLH, FTQVLFWLLIADVAILTWIGG, and FIIIGQVASFLYFSLFLVLAP.

The protein belongs to the cytochrome b family. As to quaternary structure, the cytochrome bc1 complex contains 3 respiratory subunits (MT-CYB, CYC1 and UQCRFS1), 2 core proteins (UQCRC1 and UQCRC2) and probably 6 low-molecular weight proteins. Heme b is required as a cofactor.

The protein resides in the mitochondrion inner membrane. Component of the ubiquinol-cytochrome c reductase complex (complex III or cytochrome b-c1 complex) that is part of the mitochondrial respiratory chain. The b-c1 complex mediates electron transfer from ubiquinol to cytochrome c. Contributes to the generation of a proton gradient across the mitochondrial membrane that is then used for ATP synthesis. The chain is Cytochrome b (mt-cyb) from Poeciliopsis occidentalis (Gila topminnow).